A 308-amino-acid chain; its full sequence is Ornithine carbamoyltransferase (308 aa).

Carbamoyl phosphate contacts are provided by residues 50-53, Gln77, Arg101, and 128-131; these read STRT and HPCQ. L-ornithine is bound by residues Asn160, Asp224, and 228–229; that span reads SM. Carbamoyl phosphate is bound by residues 264–265 and Arg292; that span reads CL.

It belongs to the aspartate/ornithine carbamoyltransferase superfamily. OTCase family.

The protein localises to the cytoplasm. It catalyses the reaction carbamoyl phosphate + L-ornithine = L-citrulline + phosphate + H(+). The protein operates within amino-acid biosynthesis; L-arginine biosynthesis; L-arginine from L-ornithine and carbamoyl phosphate: step 1/3. Its function is as follows. Reversibly catalyzes the transfer of the carbamoyl group from carbamoyl phosphate (CP) to the N(epsilon) atom of ornithine (ORN) to produce L-citrulline. This is Ornithine carbamoyltransferase from Mycobacterium ulcerans (strain Agy99).